Here is a 450-residue protein sequence, read N- to C-terminus: NADP-specific glutamate dehydrogenase (450 aa).

Residue Lys-111 is part of the active site.

Belongs to the Glu/Leu/Phe/Val dehydrogenases family. In terms of assembly, homohexamer.

The enzyme catalyses L-glutamate + NADP(+) + H2O = 2-oxoglutarate + NH4(+) + NADPH + H(+). This chain is NADP-specific glutamate dehydrogenase, found in Hebeloma cylindrosporum.